The primary structure comprises 268 residues: Early nodulin-20 (268 aa).

Residues 1-24 (MSSSSPILLMFIFSIWMLISYSES) form the signal peptide. The Phytocyanin domain maps to 25-129 (TDYLVGDSEN…GLKLAVVVMV (105 aa)). The N-linked (GlcNAc...) asparagine glycan is linked to asparagine 67. Residues cysteine 83 and cysteine 117 are joined by a disulfide bond. Pro residues-rich tracts occupy residues 134-145 (SSPPPPPSPPTP) and 160-185 (PSPPSPSPSPSPSPSPSPSPRSTPIP). Residues 134–253 (SSPPPPPSPP…SGSKGGGAGH (120 aa)) form a disordered region. Over residues 199–235 (PSLSKSPSPSESPSLAPSPSDSVASLAPSSSPSDESP) the composition is skewed to low complexity. Residue serine 243 is the site of GPI-anchor amidated serine attachment. Residues 244-268 (SGSKGGGAGHGFLEVSIAMMMFLIF) constitute a propeptide, removed in mature form.

Belongs to the early nodulin-like (ENODL) family.

It localises to the cell membrane. In terms of biological role, may act as a carbohydrate transporter. The polypeptide is Early nodulin-20 (Medicago truncatula (Barrel medic)).